We begin with the raw amino-acid sequence, 80 residues long: RNA-binding protein Hfq (80 aa).

Residues 10–70 (DLFLNTVRKQ…ISTIMPGQPL (61 aa)) form the Sm domain.

Belongs to the Hfq family. As to quaternary structure, homohexamer.

Its function is as follows. RNA chaperone that binds small regulatory RNA (sRNAs) and mRNAs to facilitate mRNA translational regulation in response to envelope stress, environmental stress and changes in metabolite concentrations. Also binds with high specificity to tRNAs. This chain is RNA-binding protein Hfq, found in Rhizobium meliloti (strain 1021) (Ensifer meliloti).